The primary structure comprises 1485 residues: MIERGKFRSLTLVNWNGFFARTFDLDELVTTLSGGNGAGKSTTMAAFVTALIPDLTLLHFRNTTEAGATSGSRDKGLHGKLRAGVCYSTLDVVNSRHQRVVVGVRLQQVAGRDRKVDIKPFTIQGLPTAIQPTEILTELVAERQARVLSLPELKERVEAMEGVQFKQFNSITDYHSLMFDLGVIPKRLRSSADRSKFYRLIEASLYGGISSAITRSLRDYLLPENSGVRKAFQDMEAALRENRMTLEAIRVTQSDRDLFKHLISEATSYVAADYMRHANERRIHLDSALVLRRDLFSSRKQLVTEQYRHVEMSRELAEQSGAESDLETDYQAASDHLNLVQTAMRQQEKIERYQSDLEELTYRLEEQSEVVSEASEQQADNEARAEAAELEVDELKSQLADYQQALDVQQTRAIQYQQALQALERARALCQLPELTADNAEEWLETFHAKEQEATESLLQLEQKLSVADAAHSQFEQAYQLVVNIAGEVSRSEAWQTARELLRDWPSQQHLAERVQPLRMRLSELEQRLRAQQDAERLLQEFCKRQGNAYQPEELEALQRELESQVEELSLSVSDAGERRMAMRQELEQLKLKIQELTARAPVWLAAQDALSQLSEQSGEALEDSRQVTEYMQQLLERERETTVERDEIAASKRAIEAQIERLSQPSGAEDARLIALAERFGGVLLSEIYDDVTIDDAPYFSALYGPSRHGIVVPDLSLVREHLQGLDDCPEDLYLIEGDPQSFDDSVFAVEEHEKAVVVKIADRQWRYSRYPEVPLFGRAARENRLETLYQERDRLAERYATLSFDVQKTQRTHQAFSRFIGSHLAVAFDADPEAEIRLLNTRRGEIERALNAHEDQNQQQRQQFDQAKEGISALNRLIPLVSLLLDETLADRVEEITEELAEAQEAARYIQQHGVSLTKLEPLLSVLQSDPQQHEQLQESYVLAQNSQRLAKQQAFALTEVVQRRAHFSYTDSAGMLTENSDLNDKLRQRLEQAEAERTRAREQLRQYQSQFTQYSQVLASLKSSYDAKRDMLKELSQELVDIGVPADANAEARARARRDELHAALSTNRSRRNQLEKQLTFCEAEMDSLQKKLRKLERDYHQIREQVVNAKAGWCAVMRMVKDNGVERRLHRRELAYMDGDELRSMSDKALGALRLAVADNEHLRDVLRLSEDPKRPERKIQFYIAVYQHLRERIRQDIIRTDDPVEAIEQMEIELGRLTEELTAREQKLAISSKSVSNIIRKTIHREQNRIRMLNQGLQAVSFGQVKSVRLNVNVREAHATLLDVLSEQQEQHQDLFNSNRLTFSEALAKLYQRLNPQMDMGQRLPQTIGEELLDYRNYLELEVEVYRGADGWLRAESGALSTGEAIGTGMSILVMVVQSWEEESRRLRGKDISPCRLLFLDEAARLDAKSIATLFELCERLEMQLIIAAPENISPEKGTTYKLVRKVFQNHEHVHVVGLRGFANEIPSLPPIAAELQQGG.

34–41 (GGNGAGKS) is an ATP binding site. 6 coiled-coil regions span residues 337–480 (LNLV…QAYQ), 509–605 (QHLA…PVWL), 780–805 (RAARENRLETLYQERDRLAERYATLS), 835–915 (EAEI…IQQH), 977–1116 (GMLT…AKAG), and 1210–1235 (EAIEQMEIELGRLTEELTAREQKLAI). The flexible hinge stretch occupies residues 666–783 (PSGAEDARLI…EVPLFGRAAR (118 aa)).

Belongs to the SMC family. MukB subfamily. As to quaternary structure, homodimerization via its hinge domain. Binds to DNA via its C-terminal region. Interacts, and probably forms a ternary complex, with MukE and MukF via its C-terminal region. The complex formation is stimulated by calcium or magnesium. Interacts with tubulin-related protein FtsZ.

It is found in the cytoplasm. The protein localises to the nucleoid. Functionally, plays a central role in chromosome condensation, segregation and cell cycle progression. Functions as a homodimer, which is essential for chromosome partition. Involved in negative DNA supercoiling in vivo, and by this means organize and compact chromosomes. May achieve or facilitate chromosome segregation by condensation DNA from both sides of a centrally located replisome during cell division. This Yersinia pseudotuberculosis serotype O:1b (strain IP 31758) protein is Chromosome partition protein MukB.